Here is a 344-residue protein sequence, read N- to C-terminus: Methionine import ATP-binding protein MetN (344 aa).

Positions 2 to 241 (LELKQVGKVY…PQAEVTKAFV (240 aa)) constitute an ABC transporter domain. 38-45 (GYSGAGKS) is an ATP binding site.

This sequence belongs to the ABC transporter superfamily. Methionine importer (TC 3.A.1.24) family. The complex is composed of two ATP-binding proteins (MetN), two transmembrane proteins (MetI) and a solute-binding protein (MetQ).

Its subcellular location is the cell membrane. The catalysed reaction is L-methionine(out) + ATP + H2O = L-methionine(in) + ADP + phosphate + H(+). It carries out the reaction D-methionine(out) + ATP + H2O = D-methionine(in) + ADP + phosphate + H(+). Its function is as follows. Part of the ABC transporter complex MetNIQ involved in methionine import. Responsible for energy coupling to the transport system. The sequence is that of Methionine import ATP-binding protein MetN from Latilactobacillus sakei subsp. sakei (strain 23K) (Lactobacillus sakei subsp. sakei).